The chain runs to 180 residues: Protein GrpE (180 aa).

Positions Met1 to Met19 are enriched in basic and acidic residues. Positions Met1 to Glu25 are disordered.

This sequence belongs to the GrpE family. Homodimer.

It localises to the cytoplasm. Participates actively in the response to hyperosmotic and heat shock by preventing the aggregation of stress-denatured proteins, in association with DnaK and GrpE. It is the nucleotide exchange factor for DnaK and may function as a thermosensor. Unfolded proteins bind initially to DnaJ; upon interaction with the DnaJ-bound protein, DnaK hydrolyzes its bound ATP, resulting in the formation of a stable complex. GrpE releases ADP from DnaK; ATP binding to DnaK triggers the release of the substrate protein, thus completing the reaction cycle. Several rounds of ATP-dependent interactions between DnaJ, DnaK and GrpE are required for fully efficient folding. The chain is Protein GrpE from Nitratiruptor sp. (strain SB155-2).